Consider the following 577-residue polypeptide: Arginine--tRNA ligase (577 aa).

Positions 122-132 (PNVAKEMHVGH) match the 'HIGH' region motif.

The protein belongs to the class-I aminoacyl-tRNA synthetase family. Monomer.

It is found in the cytoplasm. The enzyme catalyses tRNA(Arg) + L-arginine + ATP = L-arginyl-tRNA(Arg) + AMP + diphosphate. The protein is Arginine--tRNA ligase of Salmonella gallinarum (strain 287/91 / NCTC 13346).